The chain runs to 309 residues: NADH-quinone oxidoreductase subunit C (309 aa).

The interval 198-309 (LPGDEKAVPP…RTRKKKEDGE (112 aa)) is disordered. Positions 220–230 (TKGDAKADVPK) are enriched in basic and acidic residues. Positions 246–261 (DAAAKPVAEAAAPAAT) are enriched in low complexity.

It belongs to the complex I 30 kDa subunit family. In terms of assembly, NDH-1 is composed of 14 different subunits. Subunits NuoB, C, D, E, F, and G constitute the peripheral sector of the complex.

Its subcellular location is the cell inner membrane. It carries out the reaction a quinone + NADH + 5 H(+)(in) = a quinol + NAD(+) + 4 H(+)(out). NDH-1 shuttles electrons from NADH, via FMN and iron-sulfur (Fe-S) centers, to quinones in the respiratory chain. The immediate electron acceptor for the enzyme in this species is believed to be ubiquinone. Couples the redox reaction to proton translocation (for every two electrons transferred, four hydrogen ions are translocated across the cytoplasmic membrane), and thus conserves the redox energy in a proton gradient. This Novosphingobium aromaticivorans (strain ATCC 700278 / DSM 12444 / CCUG 56034 / CIP 105152 / NBRC 16084 / F199) protein is NADH-quinone oxidoreductase subunit C.